An 865-amino-acid chain; its full sequence is Taste receptor type 1 member 3 (865 aa).

The N-terminal stretch at 1-24 is a signal peptide; the sequence is MPGLALLGLTALLGLTALLDHGEG. The Extracellular segment spans residues 25–573; that stretch reads ATSCLSQQLR…FLAWGEPAVL (549 aa). N-linked (GlcNAc...) asparagine glycans are attached at residues asparagine 134 and asparagine 267. Residues 574 to 594 form a helical membrane-spanning segment; the sequence is LLLALLALALGLALAALGLFL. Over 595–606 the chain is Cytoplasmic; sequence WHSDSPLVQASG. The helical transmembrane segment at 607 to 627 threads the bilayer; the sequence is GPRACFGLACLGLVCLSVLLF. Topologically, residues 628-642 are extracellular; that stretch reads PGQPGPASCLAQQPL. The chain crosses the membrane as a helical span at residues 643–663; the sequence is FHLPLTGCLSTFFLQAAEIFV. Residues 664–685 lie on the Cytoplasmic side of the membrane; sequence GSELPPSWAEKMRGRLRGPWAW. Residues 686 to 706 traverse the membrane as a helical segment; the sequence is LVVLLAMLAEAALCAWYLVAF. Topologically, residues 707–732 are extracellular; the sequence is PPEVVTDWRVLPTEALVHCHVHSWIS. A helical membrane pass occupies residues 733 to 753; the sequence is FGLVHATNAMLAFLCFLGTFL. Topologically, residues 754 to 765 are cytoplasmic; that stretch reads VQSRPGRYNGAR. The helical transmembrane segment at 766 to 786 threads the bilayer; that stretch reads GLTFAMLAYFITWISFVPLFA. The Extracellular segment spans residues 787–794; the sequence is NVHVAYQP. The chain crosses the membrane as a helical span at residues 795 to 815; it reads AVQMGTILLCALGILATFHLP. The Cytoplasmic portion of the chain corresponds to 816-865; it reads KCYLLLQRPELNTPEFFLEDNARAQGSSWGQGRGESGQKQVTPDPVTSPQ. The disordered stretch occupies residues 840–865; it reads QGSSWGQGRGESGQKQVTPDPVTSPQ. A compositionally biased stretch (polar residues) spans 852–865; the sequence is GQKQVTPDPVTSPQ.

This sequence belongs to the G-protein coupled receptor 3 family. TAS1R subfamily. In terms of assembly, forms homodimers or a heterodimer with TAS1R1. In terms of tissue distribution, expressed in taste buds.

It localises to the cell membrane. Its function is as follows. Putative taste receptor. TAS1R1/TAS1R3 responds to the umami taste stimulus (the taste of monosodium glutamate). This Felis catus (Cat) protein is Taste receptor type 1 member 3 (TAS1R3).